Here is a 282-residue protein sequence, read N- to C-terminus: Protoheme IX farnesyltransferase (282 aa).

The next 9 membrane-spanning stretches (helical) occupy residues 9–29 (LAKP…FLLA), 39–59 (LPLF…GCVF), 79–99 (LVTG…LLIL), 102–122 (LVLY…GFIV), 139–159 (VLGG…VVNI), 165–185 (LALF…IAML), 210–230 (IMLF…VLGS), 231–251 (ADLF…YKSI), and 261–281 (VFAK…CLTM).

The protein belongs to the UbiA prenyltransferase family. Protoheme IX farnesyltransferase subfamily.

The protein resides in the cell inner membrane. It catalyses the reaction heme b + (2E,6E)-farnesyl diphosphate + H2O = Fe(II)-heme o + diphosphate. It participates in porphyrin-containing compound metabolism; heme O biosynthesis; heme O from protoheme: step 1/1. Converts heme B (protoheme IX) to heme O by substitution of the vinyl group on carbon 2 of heme B porphyrin ring with a hydroxyethyl farnesyl side group. This chain is Protoheme IX farnesyltransferase, found in Francisella tularensis subsp. novicida (strain U112).